The following is a 112-amino-acid chain: M-myrmeciitoxin-Mp1 (112 aa).

The signal sequence occupies residues 1–26; the sequence is MKLSCLLLTLTIIFVLTIVHAPNVEA. Positions 27-56 are excised as a propeptide; that stretch reads KDLADPESEAVGFADAFGEADAVGEADPNA. The critical for cytotoxic activity stretch occupies residues 57 to 78; that stretch reads GLGSVFGRLARILGRVIPKVAK. Residues 93–106 form an igE-binding determinant region; sequence KEAIPMAVEMAKSQ.

The protein belongs to the formicidae venom precursor-01 superfamily. Ant pilosulin family. Expressed by the venom gland.

The protein resides in the secreted. Its function is as follows. Has strong cytotoxic and hemolytic activities. Is more potent against mononuclear leukocytes than against granulocytes. The synthesized peptide 57-76 shows a potent and broad spectrum antimicrobial activity against both Gram-positive and Gram-negative bacteria, and also against the fungus C.albicans. Adopts an alpha-helical structure. The polypeptide is M-myrmeciitoxin-Mp1 (Myrmecia pilosula (Jack jumper ant)).